The chain runs to 120 residues: Basic phospholipase A2 homolog piratoxin-3 (120 aa).

Cystine bridges form between Cys26–Cys113, Cys28–Cys44, Cys43–Cys94, Cys49–Cys120, Cys50–Cys87, Cys57–Cys81, and Cys75–Cys85. Residues 104–115 (KKYRYHLKPCKK) form an important for membrane-damaging activities in eukaryotes and bacteria; heparin-binding region.

The protein belongs to the phospholipase A2 family. Group II subfamily. D49 sub-subfamily. In terms of assembly, homodimer; non-covalently linked (probable alternative/compact dimer conformation). In terms of tissue distribution, expressed by the venom gland.

The protein resides in the secreted. Snake venom phospholipase A2 (PLA2) that lacks enzymatic activity. Shows high myotoxin activities. Also has anticoagulant activity. A model of myotoxic mechanism has been proposed: an apo Lys49-PLA2 is activated by the entrance of a hydrophobic molecule (e.g. fatty acid) at the hydrophobic channel of the protein leading to a reorientation of a monomer. This reorientation causes a transition between 'inactive' to 'active' states, causing alignment of C-terminal and membrane-docking sites (MDoS) side-by-side and putting the membrane-disruption sites (MDiS) in the same plane, exposed to solvent and in a symmetric position for both monomers. The MDoS region stabilizes the toxin on membrane by the interaction of charged residues with phospholipid head groups. Subsequently, the MDiS region destabilizes the membrane with penetration of hydrophobic residues. This insertion causes a disorganization of the membrane, allowing an uncontrolled influx of ions (i.e. calcium and sodium), and eventually triggering irreversible intracellular alterations and cell death. This chain is Basic phospholipase A2 homolog piratoxin-3, found in Bothrops pirajai (Piraja's lancehead).